A 137-amino-acid chain; its full sequence is Small ribosomal subunit protein uS12 (137 aa).

2 disordered regions span residues 1-22 (MPTINQLVRKGRKSHKGKSKSP) and 37-57 (KNPSPQKRGVATRVGTMTPKK). Residues 9 to 19 (RKGRKSHKGKS) are compositionally biased toward basic residues. Position 102 is a 3-methylthioaspartic acid (Asp-102).

It belongs to the universal ribosomal protein uS12 family. Part of the 30S ribosomal subunit. Contacts proteins S8 and S17. May interact with IF1 in the 30S initiation complex.

In terms of biological role, with S4 and S5 plays an important role in translational accuracy. Its function is as follows. Interacts with and stabilizes bases of the 16S rRNA that are involved in tRNA selection in the A site and with the mRNA backbone. Located at the interface of the 30S and 50S subunits, it traverses the body of the 30S subunit contacting proteins on the other side and probably holding the rRNA structure together. The combined cluster of proteins S8, S12 and S17 appears to hold together the shoulder and platform of the 30S subunit. The chain is Small ribosomal subunit protein uS12 from Limosilactobacillus fermentum (strain NBRC 3956 / LMG 18251) (Lactobacillus fermentum).